Consider the following 319-residue polypeptide: GTP 3',8-cyclase (319 aa).

A Radical SAM core domain is found at Lys-4–Leu-227. Arg-13 lines the GTP pocket. Cys-20 and Cys-24 together coordinate [4Fe-4S] cluster. Residue Tyr-26 coordinates S-adenosyl-L-methionine. Cys-27 provides a ligand contact to [4Fe-4S] cluster. Residue Arg-63 coordinates GTP. Gly-67 is a binding site for S-adenosyl-L-methionine. Residue Thr-94 participates in GTP binding. Ser-118 is a binding site for S-adenosyl-L-methionine. Lys-155 is a binding site for GTP. Met-189 provides a ligand contact to S-adenosyl-L-methionine. Positions 249 and 252 each coordinate [4Fe-4S] cluster. Arg-254–Arg-256 is a binding site for GTP. [4Fe-4S] cluster is bound at residue Cys-266.

It belongs to the radical SAM superfamily. MoaA family. As to quaternary structure, monomer and homodimer. [4Fe-4S] cluster is required as a cofactor.

It catalyses the reaction GTP + AH2 + S-adenosyl-L-methionine = (8S)-3',8-cyclo-7,8-dihydroguanosine 5'-triphosphate + 5'-deoxyadenosine + L-methionine + A + H(+). It functions in the pathway cofactor biosynthesis; molybdopterin biosynthesis. Catalyzes the cyclization of GTP to (8S)-3',8-cyclo-7,8-dihydroguanosine 5'-triphosphate. In Clostridium botulinum (strain Langeland / NCTC 10281 / Type F), this protein is GTP 3',8-cyclase.